The following is an 80-amino-acid chain: Small ribosomal subunit protein bS16 (80 aa).

Belongs to the bacterial ribosomal protein bS16 family.

The sequence is that of Small ribosomal subunit protein bS16 from Acholeplasma laidlawii (strain PG-8A).